We begin with the raw amino-acid sequence, 263 residues long: Small ribosomal subunit protein eS4 (263 aa).

Residues 42-104 (LPLIIFLRNK…TGENFRLIYD (63 aa)) enclose the S4 RNA-binding domain. Lys230 participates in a covalent cross-link: Glycyl lysine isopeptide (Lys-Gly) (interchain with G-Cter in SUMO2). Residue Lys233 is modified to N6-acetyllysine.

Belongs to the eukaryotic ribosomal protein eS4 family. Component of the small ribosomal subunit. Part of the small subunit (SSU) processome, composed of more than 70 proteins and the RNA chaperone small nucleolar RNA (snoRNA) U3. Identified in a IGF2BP1-dependent mRNP granule complex containing untranslated mRNAs.

The protein localises to the cytoplasm. Its subcellular location is the nucleus. It is found in the nucleolus. Functionally, component of the small ribosomal subunit. The ribosome is a large ribonucleoprotein complex responsible for the synthesis of proteins in the cell. Part of the small subunit (SSU) processome, first precursor of the small eukaryotic ribosomal subunit. During the assembly of the SSU processome in the nucleolus, many ribosome biogenesis factors, an RNA chaperone and ribosomal proteins associate with the nascent pre-rRNA and work in concert to generate RNA folding, modifications, rearrangements and cleavage as well as targeted degradation of pre-ribosomal RNA by the RNA exosome. This Oryctolagus cuniculus (Rabbit) protein is Small ribosomal subunit protein eS4 (RPS4X).